The sequence spans 336 residues: MSQPSGGRAPGTRIYSWSCPTVMSPGEKLDPIPDSFILQPPVFHPVVPYVTTIFGGLHAGKMVMLQGVVPLDAHRFQVDFQCGCSLCPRPDIAFHFNPRFHTTKPHVICNTLHGGRWQREARWPHLALRRGSSFLILFLFGNEEVKVSVNGQHFLHFRYRLPLSHVDTLGIFGDILVEAVGFLNINPFVEGSREYPAGHPFLLMSPRLEVPCSHALPQGLSPGQVIIVRGLVLQEPKHFTVSLRDQAAHAPVTLRASFADRTLAWISRWGQKKLISAPFLFYPQRFFEVLLLFQEGGLKLALNGQGLGATSMNQQALEQLRELRISGSVQLYCVHS.

2 Galectin domains span residues 49–183 and 212–336; these read YVTT…VGFL and CSHA…CVHS.

Not widely expressed. Predominantly expressed in adipose tissue.

Its subcellular location is the nucleus. Binds lactose. May participate in the apoptosis of adipocytes. In Homo sapiens (Human), this protein is Galectin-12 (LGALS12).